Here is a 752-residue protein sequence, read N- to C-terminus: NAD(P)H-quinone oxidoreductase subunit 5, chloroplastic (752 aa).

16 helical membrane-spanning segments follow: residues 9–29 (WIIP…LLLF), 40–60 (WAFP…DLSI), 89–109 (IDPL…LVLF), 125–145 (FAYM…SNLI), 147–167 (IYIF…FWFT), 185–205 (GDFG…SFEF), 219–239 (NQVN…GAIA), 258–278 (TPIS…FLVA), 280–300 (LFPL…IGII), 327–347 (LGYM…FHLI), 354–374 (ALLF…LGYS), 396–416 (TAFL…CFWS), 425–445 (WLYS…TAFY), 549–569 (LFPM…GIPF), 608–628 (FVTN…IASF), and 728–748 (FYLL…YSVY).

It belongs to the complex I subunit 5 family. In terms of assembly, NDH is composed of at least 16 different subunits, 5 of which are encoded in the nucleus.

The protein localises to the plastid. It is found in the chloroplast thylakoid membrane. The catalysed reaction is a plastoquinone + NADH + (n+1) H(+)(in) = a plastoquinol + NAD(+) + n H(+)(out). It carries out the reaction a plastoquinone + NADPH + (n+1) H(+)(in) = a plastoquinol + NADP(+) + n H(+)(out). Functionally, NDH shuttles electrons from NAD(P)H:plastoquinone, via FMN and iron-sulfur (Fe-S) centers, to quinones in the photosynthetic chain and possibly in a chloroplast respiratory chain. The immediate electron acceptor for the enzyme in this species is believed to be plastoquinone. Couples the redox reaction to proton translocation, and thus conserves the redox energy in a proton gradient. This Manihot esculenta (Cassava) protein is NAD(P)H-quinone oxidoreductase subunit 5, chloroplastic (ndhF).